The sequence spans 531 residues: Peptide chain release factor 3 (531 aa).

In terms of domain architecture, tr-type G spans 10–278 (RRRRTFAIIS…SLIDWAPAPK (269 aa)). Residues 19–26 (SHPDAGKT), 87–91 (DTPGH), and 141–144 (NKYD) contribute to the GTP site.

The protein belongs to the TRAFAC class translation factor GTPase superfamily. Classic translation factor GTPase family. PrfC subfamily.

It is found in the cytoplasm. In terms of biological role, increases the formation of ribosomal termination complexes and stimulates activities of RF-1 and RF-2. It binds guanine nucleotides and has strong preference for UGA stop codons. It may interact directly with the ribosome. The stimulation of RF-1 and RF-2 is significantly reduced by GTP and GDP, but not by GMP. The sequence is that of Peptide chain release factor 3 from Neisseria gonorrhoeae (strain NCCP11945).